The chain runs to 94 residues: Pyrimidine/purine nucleoside phosphorylase (94 aa).

Belongs to the nucleoside phosphorylase PpnP family.

It carries out the reaction a purine D-ribonucleoside + phosphate = a purine nucleobase + alpha-D-ribose 1-phosphate. The enzyme catalyses adenosine + phosphate = alpha-D-ribose 1-phosphate + adenine. It catalyses the reaction cytidine + phosphate = cytosine + alpha-D-ribose 1-phosphate. The catalysed reaction is guanosine + phosphate = alpha-D-ribose 1-phosphate + guanine. It carries out the reaction inosine + phosphate = alpha-D-ribose 1-phosphate + hypoxanthine. The enzyme catalyses thymidine + phosphate = 2-deoxy-alpha-D-ribose 1-phosphate + thymine. It catalyses the reaction uridine + phosphate = alpha-D-ribose 1-phosphate + uracil. The catalysed reaction is xanthosine + phosphate = alpha-D-ribose 1-phosphate + xanthine. Catalyzes the phosphorolysis of diverse nucleosides, yielding D-ribose 1-phosphate and the respective free bases. Can use uridine, adenosine, guanosine, cytidine, thymidine, inosine and xanthosine as substrates. Also catalyzes the reverse reactions. This Salmonella heidelberg (strain SL476) protein is Pyrimidine/purine nucleoside phosphorylase.